A 737-amino-acid chain; its full sequence is Protein bicaudal D homolog (737 aa).

3 coiled-coil regions span residues 1–255 (MAES…RNAE), 292–319 (GSSDVKVRELEAAKEGLQEELKSREKIF), and 547–684 (AENE…DRDR). The tract at residues 72-97 (YRSQHQRSTRSELENEESLLEESSAK) is disordered. Positions 686-737 (VFKRSSTRAPTRETYQPPRAVRYPGSTTTAQQPAPSSSGGSRGGPRRGDNQQ) are disordered. The segment covering 710-719 (GSTTTAQQPA) has biased composition (polar residues).

This sequence belongs to the BicD family. As to quaternary structure, component of a dynein-regulating complex composed of at least bicd-1, dlc-1 and egal-1. Interacts with egal-1 and unc-83. Expressed in the excretory cell, body wall muscles, vulval muscle cells, PVD and FLP sensory neurons and AVF interneurons.

It is found in the nucleus envelope. The protein resides in the perikaryon. Its subcellular location is the cell projection. The protein localises to the dendrite. In terms of biological role, part of a complex with dlc-1 and egal-1, which is recruited to the nuclear envelope by unc-83, where in turn, it recruits dynein to the nuclear surface and regulates nuclear migration in hypodermal precursor cells. Required for the formation of dendritic branches of PVD sensory neurons. This Caenorhabditis elegans protein is Protein bicaudal D homolog.